The chain runs to 854 residues: Selenocysteine insertion sequence-binding protein 2 (854 aa).

Disordered regions lie at residues 332–351 (ADPK…DPSY), 356–394 (HIIH…KYEV), 417–445 (ERRD…KKSQ), and 488–619 (ECAS…PNHT). Composition is skewed to polar residues over residues 338–350 (SIPS…SDPS) and 361–372 (TQKSKASQGSDL). The short motif at 380-387 (KNKKKKEK) is the Nuclear localization signal element. A compositionally biased stretch (polar residues) spans 426–445 (KFQSKQQPQDNFKNNVKKSQ). The segment covering 536–547 (ILKERQERKQRL) has biased composition (basic and acidic residues). A compositionally biased stretch (polar residues) spans 548–559 (QENAVSPAFTSD). The segment covering 560-572 (DTQDGESGGDDQF) has biased composition (acidic residues). The span at 593–611 (VEDKSEEPPGTELQRDTEA) shows a compositional bias: basic and acidic residues. The segment at 673–694 (LVLGLREVLKHLKLKKLKCVII) is RNA-binding. Positions 787 to 812 (EPRPQAPPSLPTQGPSCPAEDGPPAL) are disordered.

As to expression, expressed at high levels in testis.

It is found in the nucleus. Its subcellular location is the mitochondrion. Functionally, mRNA-binding protein that binds to the SECIS (selenocysteine insertion sequence) element present in the 3'-UTR of mRNAs encoding selenoproteins and facilitates the incorporation of the rare amino acid selenocysteine. Insertion of selenocysteine at UGA codons is mediated by SECISBP2 and EEFSEC: SECISBP2 (1) specifically binds the SECIS sequence once the 80S ribosome encounters an in-frame UGA codon and (2) contacts the RPS27A/eS31 of the 40S ribosome before ribosome stalling. (3) GTP-bound EEFSEC then delivers selenocysteinyl-tRNA(Sec) to the 80S ribosome and adopts a preaccommodated state conformation. (4) After GTP hydrolysis, EEFSEC dissociates from the assembly, selenocysteinyl-tRNA(Sec) accommodates, and peptide bond synthesis and selenoprotein elongation occur. The polypeptide is Selenocysteine insertion sequence-binding protein 2 (Homo sapiens (Human)).